The sequence spans 232 residues: Orotidine 5'-phosphate decarboxylase (232 aa).

Substrate is bound by residues Asp-13, Lys-35, 62 to 71 (DLKFHDIPNT), Thr-122, Arg-182, Gln-191, Gly-211, and Arg-212. Catalysis depends on Lys-64, which acts as the Proton donor.

Belongs to the OMP decarboxylase family. Type 1 subfamily. Homodimer.

It catalyses the reaction orotidine 5'-phosphate + H(+) = UMP + CO2. Its pathway is pyrimidine metabolism; UMP biosynthesis via de novo pathway; UMP from orotate: step 2/2. Its function is as follows. Catalyzes the decarboxylation of orotidine 5'-monophosphate (OMP) to uridine 5'-monophosphate (UMP). This is Orotidine 5'-phosphate decarboxylase from Pseudomonas aeruginosa (strain LESB58).